A 687-amino-acid chain; its full sequence is Polyphosphate kinase (687 aa).

Asparagine 45 contacts ATP. Mg(2+) contacts are provided by arginine 375 and arginine 405. The active-site Phosphohistidine intermediate is the histidine 435. Tyrosine 472, arginine 568, and histidine 596 together coordinate ATP.

It belongs to the polyphosphate kinase 1 (PPK1) family. The cofactor is Mg(2+). An intermediate of this reaction is the autophosphorylated ppk in which a phosphate is covalently linked to a histidine residue through a N-P bond.

The enzyme catalyses [phosphate](n) + ATP = [phosphate](n+1) + ADP. Its function is as follows. Catalyzes the reversible transfer of the terminal phosphate of ATP to form a long-chain polyphosphate (polyP). This chain is Polyphosphate kinase, found in Paraburkholderia phytofirmans (strain DSM 17436 / LMG 22146 / PsJN) (Burkholderia phytofirmans).